A 302-amino-acid chain; its full sequence is Ribosome-binding factor PSRP1, chloroplastic (302 aa).

The transit peptide at 1–66 directs the protein to the chloroplast; it reads MATLCTSAIN…SRNKPNVVCM (66 aa).

As to quaternary structure, binds to the mRNA channel of the chloroplast small ribosomal subunit and interacts with 16S sRNA nucleotides at the A-site and P-site.

It localises to the plastid. The protein resides in the chloroplast stroma. Functionally, ribosome-binding factor involved in light- and temperature-dependent control of protein synthesis. Interacts with 16S sRNA nucleotides at the A-site and P-site, where it protects the decoding center and inhibits translation by preventing tRNA binding. Stabilizes 70S ribosomes against dissociation. May be recycled by the combined action of ribosome-recycling factor (RRF) and EF-G. The polypeptide is Ribosome-binding factor PSRP1, chloroplastic (PSRP1) (Spinacia oleracea (Spinach)).